The chain runs to 402 residues: S-adenosylmethionine synthase (402 aa).

Residue His15 participates in ATP binding. Asp17 serves as a coordination point for Mg(2+). K(+) is bound at residue Glu43. L-methionine contacts are provided by Glu56 and Gln99. Residues 99 to 109 (QSPDIAQGVDT) are flexible loop. Residues 174–176 (DGK), 247–248 (RF), Asp256, 262–263 (RK), Ala279, and Lys283 each bind ATP. Asp256 contacts L-methionine. Lys287 provides a ligand contact to L-methionine.

This sequence belongs to the AdoMet synthase family. In terms of assembly, homotetramer; dimer of dimers. Mg(2+) is required as a cofactor. It depends on K(+) as a cofactor.

The protein resides in the cytoplasm. The enzyme catalyses L-methionine + ATP + H2O = S-adenosyl-L-methionine + phosphate + diphosphate. It functions in the pathway amino-acid biosynthesis; S-adenosyl-L-methionine biosynthesis; S-adenosyl-L-methionine from L-methionine: step 1/1. Its function is as follows. Catalyzes the formation of S-adenosylmethionine (AdoMet) from methionine and ATP. The overall synthetic reaction is composed of two sequential steps, AdoMet formation and the subsequent tripolyphosphate hydrolysis which occurs prior to release of AdoMet from the enzyme. This is S-adenosylmethionine synthase from Streptomyces griseus subsp. griseus (strain JCM 4626 / CBS 651.72 / NBRC 13350 / KCC S-0626 / ISP 5235).